The primary structure comprises 410 residues: Tegument protein VP16 homolog (410 aa).

Positions 388–410 (PPSPSEILPGDPPRPPTCGFLTR) are disordered.

This sequence belongs to the herpesviridae tegument protein VP16 protein family. Associates with the VP16-induced complex; binding to host HCFC1 activates VP16 for association with the octamer motif-binding host protein POU2F1, to form a multiprotein-DNA complex responsible for activating transcription of the viral immediate early genes.

It is found in the virion tegument. Its subcellular location is the host nucleus. Its function is as follows. Transcriptional activator of immediate-early (IE) gene products (alpha genes). Acts as a key activator of lytic infection by initiating the lytic program through the assembly of the transcriptional regulatory VP16-induced complex composed of VP16 and two cellular factors, HCFC1 and POU2F 1. VP16-induced complex represents a regulatory switch: when it is on, it promotes IE-gene expression and thus lytic infection, and when it is off, it limits IE-gene transcription favoring latent infection. May play a role in the aggregation of tegument proteins around nucleocapsids during virus morphogenesis. This Varicella-zoster virus (strain Oka vaccine) (HHV-3) protein is Tegument protein VP16 homolog.